The sequence spans 187 residues: Elongation factor P (187 aa).

It belongs to the elongation factor P family.

The protein resides in the cytoplasm. It functions in the pathway protein biosynthesis; polypeptide chain elongation. In terms of biological role, involved in peptide bond synthesis. Stimulates efficient translation and peptide-bond synthesis on native or reconstituted 70S ribosomes in vitro. Probably functions indirectly by altering the affinity of the ribosome for aminoacyl-tRNA, thus increasing their reactivity as acceptors for peptidyl transferase. The polypeptide is Elongation factor P (Ruegeria pomeroyi (strain ATCC 700808 / DSM 15171 / DSS-3) (Silicibacter pomeroyi)).